The primary structure comprises 464 residues: Argininosuccinate lyase (464 aa).

Belongs to the lyase 1 family. Argininosuccinate lyase subfamily.

It localises to the cytoplasm. The catalysed reaction is 2-(N(omega)-L-arginino)succinate = fumarate + L-arginine. It participates in amino-acid biosynthesis; L-arginine biosynthesis; L-arginine from L-ornithine and carbamoyl phosphate: step 3/3. This chain is Argininosuccinate lyase, found in Pseudomonas putida (strain GB-1).